The primary structure comprises 153 residues: Interleukin-4 (153 aa).

An N-terminal signal peptide occupies residues M1 to G24. Intrachain disulfides connect C27–C151, C48–C89, and C70–C123. A glycan (N-linked (GlcNAc...) asparagine) is linked at N62.

It belongs to the IL-4/IL-13 family. As to quaternary structure, interacts with IL4R. Interacts with IL13RA1.

The protein localises to the secreted. In terms of biological role, cytokine secreted primarily by mast cells, T-cells, eosinophils, and basophils that plays a role in regulating antibody production, hematopoiesis and inflammation, and the development of effector T-cell responses. Induces the expression of class II MHC molecules on resting B-cells. Enhances both secretion and cell surface expression of IgE and IgG1. Also regulates the expression of the low affinity Fc receptor for IgE (CD23) on both lymphocytes and monocytes. Positively regulates IL31RA expression in macrophages. Stimulates autophagy in dendritic cells by interfering with mTORC1 signaling and through the induction of RUFY4. In addition, plays a critical role in higher functions of the normal brain, such as memory and learning. Upon binding to IL4, IL4R receptor dimerizes either with the common IL2R gamma chain/IL2RG to produce the type 1 signaling complex, located mainly on hematopoietic cells, or with the IL13RA1 to produce the type 2 complex, which is also expressed on nonhematopoietic cells. Engagement of both types of receptors initiates JAK3 and to a lower extend JAK1 phosphorylation leading to activation of the signal transducer and activator of transcription 6/STAT6. The sequence is that of Interleukin-4 (IL4) from Homo sapiens (Human).